A 362-amino-acid polypeptide reads, in one-letter code: HLA class I histocompatibility antigen, B alpha chain (362 aa).

A signal peptide spans 1–24; it reads MLVMAPRTVLLLLSAALALTETWA. Residues 3–11 are VL9 epitope; it reads VMAPRTVLL. Positions 25 to 114 are alpha-1; it reads GSHSMRYFYT…LRGYYNQSEA (90 aa). The Extracellular segment spans residues 25-309; the sequence is GSHSMRYFYT…PSSQSTVPIV (285 aa). Asn-87 is an a peptide antigen binding site. Positions 101–107 match the Bw6 motif motif; sequence SLRNLRG. Tyr-108 contacts a peptide antigen. N-linked (GlcNAc...) asparagine glycosylation is present at Asn-110. The interval 115-206 is alpha-2; the sequence is GSHTLQSMYG…ENGKDKLERA (92 aa). Cys-125 and Cys-188 form a disulfide bridge. Thr-167, Lys-170, Glu-176, Tyr-183, and Tyr-195 together coordinate a peptide antigen. Positions 207-298 are alpha-3; that stretch reads DPPKTHVTHH…GLPKPLTLRW (92 aa). The Ig-like C1-type domain maps to 209–295; the sequence is PKTHVTHHPI…QHEGLPKPLT (87 aa). A disulfide bridge connects residues Cys-227 and Cys-283. Residues 299-309 form a connecting peptide region; the sequence is EPSSQSTVPIV. The helical transmembrane segment at 310–333 threads the bilayer; that stretch reads GIVAGLAVLAVVVIGAVVAAVMCR. Topologically, residues 334–362 are cytoplasmic; that stretch reads RKSSGGKGGSYSQAACSDSAQGSDVSLTA. The tract at residues 337 to 362 is disordered; sequence SGGKGGSYSQAACSDSAQGSDVSLTA. The span at 346 to 362 shows a compositional bias: polar residues; sequence QAACSDSAQGSDVSLTA.

In terms of assembly, heterotrimer that consists of an alpha chain HLA-B, a beta chain B2M and a peptide (peptide-HLA-B-B2M). Early in biogenesis, HLA-B-B2M dimer interacts with the components of the peptide-loading complex composed of TAPBP, TAP1-TAP2, TAPBPL, PDIA3/ERP57 and CALR. Interacts with TAP1-TAP2 transporter via TAPBP; this interaction is obligatory for the loading of peptide epitopes delivered to the ER by TAP1-TAP2 transporter. Interacts with TAPBPL; TAPBPL binds peptide-free HLA-B-B2M complexes or those loaded with low affinity peptides, likely facilitating peptide exchange for higher affinity peptides. Only optimally assembled peptide-HLA-B-B2M trimer translocates to the surface of antigen-presenting cells, where it interacts with TCR and CD8 coreceptor on the surface of T cells. HLA-B (via polymorphic alpha-1 and alpha-2 domains) interacts with antigen-specific TCR (via CDR1, CDR2 and CDR3 domains). One HLA-B molecule (mainly via nonpolymorphic alpha-3 domain) interacts with one CD8A homodimer (via CDR-like loop); this interaction ensures peptide-HLA-B-B2M recognition by CD8-positive T cells only. Allele B*57:01 interacts (via Bw4 motif) with KIR3DL1 (via Ig-like C2-type domain); this interaction may interfere with peptide binding. Allele B*46:01 interacts with KIR2DL3. As to quaternary structure, (Microbial infection) Interacts with HTLV-1 accessory protein p12I.

The protein resides in the cell membrane. It localises to the endoplasmic reticulum membrane. Functionally, antigen-presenting major histocompatibility complex class I (MHCI) molecule. In complex with B2M/beta 2 microglobulin displays primarily viral and tumor-derived peptides on antigen-presenting cells for recognition by alpha-beta T cell receptor (TCR) on HLA-B-restricted CD8-positive T cells, guiding antigen-specific T cell immune response to eliminate infected or transformed cells. May also present self-peptides derived from the signal sequence of secreted or membrane proteins, although T cells specific for these peptides are usually inactivated to prevent autoreactivity. Both the peptide and the MHC molecule are recognized by TCR, the peptide is responsible for the fine specificity of antigen recognition and MHC residues account for the MHC restriction of T cells. Typically presents intracellular peptide antigens of 8 to 13 amino acids that arise from cytosolic proteolysis via constitutive proteasome and IFNG-induced immunoproteasome. Can bind different peptides containing allele-specific binding motifs, which are mainly defined by anchor residues at position 2 and 9. Its function is as follows. Allele B*07:02: Displays peptides sharing a common signature motif, namely a Pro residue at position 2 and mainly a Leu anchor residue at the C-terminus. Presents a long peptide (APRGPHGGAASGL) derived from the cancer-testis antigen CTAG1A/NY-ESO-1, eliciting a polyclonal CD8-positive T cell response against tumor cells. Presents viral epitopes derived from HIV-1 gag-pol (TPQDLNTML) and Nef (RPQVPLRPM). Presents an immunodominant epitope derived from SARS-CoV-2 N/nucleoprotein (SPRWYFYYL). Displays self-peptides including a peptide derived from the signal sequence of HLA-DPB1 (APRTVALTA). In terms of biological role, allele B*08:01: Presents to CD8-positive T cells viral epitopes derived from EBV/HHV-4 EBNA3 (QAKWRLQTL), eliciting cytotoxic T cell response. Allele B*13:02: Presents multiple HIV-1 epitopes derived from gag (RQANFLGKI, GQMREPRGSDI), nef (RQDILDLWI), gag-pol (RQYDQILIE, GQGQWTYQI) and rev (LQLPPLERL), all having in common a Gln residue at position 2 and mainly hydrophobic amino acids Leu, Ile or Val at the C-terminus. Associated with successful control of HIV-1 infection. Functionally, allele B*18:01: Preferentially presents octomeric and nonameric peptides sharing a common motif, namely a Glu at position 2 and Phe or Tyr anchor residues at the C-terminus. Presents an EBV/HHV-4 epitope derived from BZLF1 (SELEIKRY). May present to CD8-positive T cells an antigenic peptide derived from MAGEA3 (MEVDPIGHLY), triggering an anti-tumor immune response. May display a broad repertoire of self-peptides with a preference for peptides derived from RNA-binding proteins. Its function is as follows. Allele B*27:05: Presents to CD8-positive T cells immunodominant viral epitopes derived from HCV POLG (ARMILMTHF), HIV-1 gag (KRWIILGLNK), IAV NP (SRYWAIRTR), SARS-CoV-2 N/nucleoprotein (QRNAPRITF), EBV/HHV-4 EBNA4 (HRCQAIRKK) and EBV/HHV-4 EBNA6 (RRIYDLIEL), conferring longterm protection against viral infection. Can present self-peptides derived from cytosolic and nuclear proteins. All peptides carry an Arg at position 2. The peptide-bound form interacts with NK cell inhibitory receptor KIR3DL1 and inhibits NK cell activation in a peptide-specific way, being particularly sensitive to the nature of the amino acid side chain at position 8 of the antigenic peptide. KIR3DL1 fails to recognize HLA-B*27:05 in complex with B2M and EBV/HHV-4 EBNA6 (RRIYDLIEL) peptide, which can lead to increased activation of NK cells during infection. May present an altered repertoire of peptides in the absence of TAP1-TAP2 and TAPBPL. In terms of biological role, allele B*40:01: Presents immunodominant viral epitopes derived from EBV/HHV-4 LMP2 (IEDPPFNSL) and SARS-CoV-2 N/nucleoprotein (MEVTPSGTWL), triggering memory CD8-positive T cell response. Displays self-peptides sharing a signature motif, namely a Glu at position 2 and a Leu anchor residue at the C-terminus. Allele B*41:01: Displays self-peptides sharing a signature motif, namely a Glu at position 2 and Ala or Pro anchor residues at the C-terminus. Functionally, allele B*44:02: Presents immunodominant viral epitopes derived from EBV/HHV-4 EBNA4 (VEITPYKPTW) and EBNA6 (AEGGVGWRHW, EENLLDFVRF), triggering memory CD8-positive T cell response. Displays self-peptides sharing a signature motif, namely a Glu at position 2 and Phe, Tyr or Trp anchor residues at the C-terminus. Its function is as follows. Allele B*45:01: Displays self-peptides sharing a signature motif, namely a Glu at position 2 and Ala or Pro anchor residues at the C-terminus. In terms of biological role, allele B*46:01: Preferentially presents nonameric peptides sharing a signature motif, namely Ala and Leu at position 2 and Tyr, Phe, Leu, or Met anchor residues at the C-terminus. The peptide-bound form interacts with KIR2DL3 and inhibits NK cell cytotoxic response in a peptide-specific way. Allele B*47:01: Displays self-peptides sharing a signature motif, namely an Asp at position 2 and Leu or Met anchor residues at the C-terminus. Functionally, allele B*49:01: Displays self-peptides sharing a signature motif, namely a Glu at position 2 and Ile or Val anchor residues at the C-terminus. Its function is as follows. Allele B*50:01: Displays self-peptides sharing a signature motif, namely a Glu at position 2 and Ala or Pro anchor residues at the C-terminus. In terms of biological role, allele B*51:01: Presents an octomeric HIV-1 epitope derived from gag-pol (TAFTIPSI) to the public TRAV17/TRBV7-3 TCR clonotype, strongly suppressing HIV-1 replication. Allele B*54:01: Displays peptides sharing a common signature motif, namely a Pro residue at position 2 and Ala anchor residue at the C-terminus. Functionally, allele B*55:01: Displays peptides sharing a common signature motif, namely a Pro residue at position 2 and Ala anchor residue at the C-terminus. Its function is as follows. Allele B*56:01: Displays peptides sharing a common signature motif, namely a Pro residue at position 2 and Ala anchor residue at the C-terminus. In terms of biological role, allele B*57:01: The peptide-bound form recognizes KIR3DL1 and inhibits NK cell cytotoxic response. Presents HIV gag peptides (immunodominant KAFSPEVIPMF and subdominant KALGPAATL epitopes) predominantly to CD8-positive T cell clones expressing a TRAV41-containing TCR, triggering HLA-B-restricted T cell responses. Allele B*67:01: Displays peptides sharing a common signature motif, namely a Pro residue at position 2 and Leu anchor residue at the C-terminus. This chain is HLA class I histocompatibility antigen, B alpha chain, found in Homo sapiens (Human).